We begin with the raw amino-acid sequence, 196 residues long: 3-isopropylmalate dehydratase small subunit (196 aa).

Belongs to the LeuD family. LeuD type 1 subfamily. In terms of assembly, heterodimer of LeuC and LeuD.

It catalyses the reaction (2R,3S)-3-isopropylmalate = (2S)-2-isopropylmalate. Its pathway is amino-acid biosynthesis; L-leucine biosynthesis; L-leucine from 3-methyl-2-oxobutanoate: step 2/4. Its function is as follows. Catalyzes the isomerization between 2-isopropylmalate and 3-isopropylmalate, via the formation of 2-isopropylmaleate. This Corynebacterium diphtheriae (strain ATCC 700971 / NCTC 13129 / Biotype gravis) protein is 3-isopropylmalate dehydratase small subunit.